The sequence spans 377 residues: N5-carboxyaminoimidazole ribonucleotide synthase (377 aa).

ATP-binding positions include R93, K133, 138–144 (GYDGKGQ), 175–178 (EEFV), E183, H206, and 257–258 (NE). The ATP-grasp domain maps to 97 to 287 (KALLDHAGVR…QFENHLRAVC (191 aa)).

The protein belongs to the PurK/PurT family. In terms of assembly, homodimer.

It carries out the reaction 5-amino-1-(5-phospho-beta-D-ribosyl)imidazole + hydrogencarbonate + ATP = 5-carboxyamino-1-(5-phospho-D-ribosyl)imidazole + ADP + phosphate + 2 H(+). It functions in the pathway purine metabolism; IMP biosynthesis via de novo pathway; 5-amino-1-(5-phospho-D-ribosyl)imidazole-4-carboxylate from 5-amino-1-(5-phospho-D-ribosyl)imidazole (N5-CAIR route): step 1/2. Its function is as follows. Catalyzes the ATP-dependent conversion of 5-aminoimidazole ribonucleotide (AIR) and HCO(3)(-) to N5-carboxyaminoimidazole ribonucleotide (N5-CAIR). The polypeptide is N5-carboxyaminoimidazole ribonucleotide synthase (Vibrio vulnificus (strain CMCP6)).